A 176-amino-acid polypeptide reads, in one-letter code: GTP-dependent dephospho-CoA kinase (176 aa).

GTP is bound by residues Asp47, Val48, Asp66, and Glu125.

Belongs to the GTP-dependent DPCK family.

It catalyses the reaction 3'-dephospho-CoA + GTP = GDP + CoA + H(+). It participates in cofactor biosynthesis; coenzyme A biosynthesis. Catalyzes the GTP-dependent phosphorylation of the 3'-hydroxyl group of dephosphocoenzyme A to form coenzyme A (CoA). This chain is GTP-dependent dephospho-CoA kinase, found in Methanocella arvoryzae (strain DSM 22066 / NBRC 105507 / MRE50).